The following is a 284-amino-acid chain: Tryptophan 2,3-dioxygenase (284 aa).

Residues 53 to 57, tyrosine 115, and arginine 119 each bind substrate; that span reads FIVQH. Histidine 242 contributes to the heme binding site. Threonine 256 contacts substrate.

It belongs to the tryptophan 2,3-dioxygenase family. In terms of assembly, homotetramer. It depends on heme as a cofactor.

The catalysed reaction is L-tryptophan + O2 = N-formyl-L-kynurenine. Its pathway is amino-acid degradation; L-tryptophan degradation via kynurenine pathway; L-kynurenine from L-tryptophan: step 1/2. Its function is as follows. Heme-dependent dioxygenase that catalyzes the oxidative cleavage of the L-tryptophan (L-Trp) pyrrole ring and converts L-tryptophan to N-formyl-L-kynurenine. Catalyzes the oxidative cleavage of the indole moiety. This is Tryptophan 2,3-dioxygenase from Bordetella parapertussis (strain 12822 / ATCC BAA-587 / NCTC 13253).